The chain runs to 507 residues: FLYWCH transcription factor 1 (507 aa).

A compositionally biased stretch (low complexity) spans 1–26 (MYSPESMNSNISSPSPPSSSSLNAPS). The segment at 1-51 (MYSPESMNSNISSPSPPSSSSLNAPSLADAPEVRSDDGEAETSEPSTSVTA) is disordered. The segment at 135–192 (KKTRLKVFSNGFFMTFDKLSSCQKKYFWRCEYKNTCKARMHTDIVTEKILTFIHEHNH) adopts an FLYWCH-type zinc-finger fold.

Functionally, probable transcription factor. Binds to the DNA sequence motif 5'-[AG]GGCGCCG-3' in the promoters of target genes, including micro-RNA genes, in order to repress expression, and acting redundantly with flh-2. The protein is FLYWCH transcription factor 1 of Caenorhabditis elegans.